The primary structure comprises 89 residues: Small ribosomal subunit protein uS15 (89 aa).

This sequence belongs to the universal ribosomal protein uS15 family. As to quaternary structure, part of the 30S ribosomal subunit. Forms a bridge to the 50S subunit in the 70S ribosome, contacting the 23S rRNA.

Functionally, one of the primary rRNA binding proteins, it binds directly to 16S rRNA where it helps nucleate assembly of the platform of the 30S subunit by binding and bridging several RNA helices of the 16S rRNA. In terms of biological role, forms an intersubunit bridge (bridge B4) with the 23S rRNA of the 50S subunit in the ribosome. This Chromohalobacter salexigens (strain ATCC BAA-138 / DSM 3043 / CIP 106854 / NCIMB 13768 / 1H11) protein is Small ribosomal subunit protein uS15.